A 469-amino-acid chain; its full sequence is Adenosylhomocysteinase (469 aa).

Residues Thr58, Asp133, and Glu195 each coordinate substrate. Residue 196 to 198 (TTT) coordinates NAD(+). Positions 225 and 229 each coordinate substrate. Residues Asn230, 259 to 264 (GFGDVG), Glu282, Asn317, 338 to 340 (IGH), and Asn383 contribute to the NAD(+) site.

The protein belongs to the adenosylhomocysteinase family. NAD(+) is required as a cofactor.

Its subcellular location is the cytoplasm. The catalysed reaction is S-adenosyl-L-homocysteine + H2O = L-homocysteine + adenosine. The protein operates within amino-acid biosynthesis; L-homocysteine biosynthesis; L-homocysteine from S-adenosyl-L-homocysteine: step 1/1. Its function is as follows. May play a key role in the regulation of the intracellular concentration of adenosylhomocysteine. The protein is Adenosylhomocysteinase of Rhodopseudomonas palustris (strain ATCC BAA-98 / CGA009).